Here is a 1077-residue protein sequence, read N- to C-terminus: Teashirt homolog 1 (1077 aa).

Disordered stretches follow at residues M1–P109, S139–S195, and G269–E298. Positions I26–L36 are enriched in acidic residues. 2 stretches are compositionally biased toward polar residues: residues Q57 to D71 and S139 to E152. Positions P164–S195 are enriched in low complexity. 2 consecutive C2H2-type zinc fingers follow at residues F246–H270 and L307–H331. Residues G269–K284 are compositionally biased toward basic and acidic residues. Residues L416–H440 form a C2H2-type 3; atypical zinc finger. Disordered regions lie at residues S467 to L549 and T647 to K720. Basic and acidic residues-rich tracts occupy residues S496–E528, T647–S665, and K675–L708. The residue at position 765 (S765) is a Phosphoserine. Residues T848–E873 are disordered. A compositionally biased stretch (polar residues) spans P853 to S862. A DNA-binding region (homeobox; atypical) is located at residues R885–G955. 2 C2H2-type zinc fingers span residues F970–H992 and F1037–H1060.

The protein belongs to the teashirt C2H2-type zinc-finger protein family. As to quaternary structure, interacts (via homeobox domain) with APBB1 (via PID domain 1). In terms of tissue distribution, expressed in brain; strongly reduced in post-mortem elderly subjects with Alzheimer disease.

The protein resides in the nucleus. In terms of biological role, probable transcriptional regulator involved in developmental processes. May act as a transcriptional repressor (Potential). This Homo sapiens (Human) protein is Teashirt homolog 1 (TSHZ1).